A 302-amino-acid chain; its full sequence is L-aminoadipate-semialdehyde dehydrogenase-phosphopantetheinyl transferase (302 aa).

CoA-binding positions include Arg44, 83–88 (RTGKGK), and 105–108 (NVSH). 2 residues coordinate Mg(2+): Asp126 and Glu178. 178–182 (ESFIK) is a binding site for CoA.

Belongs to the P-Pant transferase superfamily. AcpS family. As to quaternary structure, monomer. The cofactor is Mg(2+).

It is found in the cytoplasm. It localises to the cytosol. The enzyme catalyses apo-[ACP] + CoA = holo-[ACP] + adenosine 3',5'-bisphosphate + H(+). The catalysed reaction is apo-[ACP] + acetyl-CoA = acetyl-[ACP] + adenosine 3',5'-bisphosphate + H(+). Catalyzes the post-translational modification of target proteins by phosphopantetheine. Can transfer the 4'-phosphopantetheine moiety from coenzyme A, regardless of whether the CoA is presented in the free thiol form or as an acetyl thioester, to a serine residue of a broad range of acceptors. In Xenopus laevis (African clawed frog), this protein is L-aminoadipate-semialdehyde dehydrogenase-phosphopantetheinyl transferase (aasdhppt).